A 204-amino-acid chain; its full sequence is Large ribosomal subunit protein uL4 (204 aa).

The span at Gly42–Ala55 shows a compositional bias: polar residues. A disordered region spans residues Gly42–Gly85. A compositionally biased stretch (low complexity) spans Gly68 to Gly79.

It belongs to the universal ribosomal protein uL4 family. In terms of assembly, part of the 50S ribosomal subunit.

Functionally, one of the primary rRNA binding proteins, this protein initially binds near the 5'-end of the 23S rRNA. It is important during the early stages of 50S assembly. It makes multiple contacts with different domains of the 23S rRNA in the assembled 50S subunit and ribosome. Forms part of the polypeptide exit tunnel. This Vesicomyosocius okutanii subsp. Calyptogena okutanii (strain HA) protein is Large ribosomal subunit protein uL4.